Consider the following 254-residue polypeptide: Triosephosphate isomerase (254 aa).

9-11 (NWK) lines the substrate pocket. His-96 (electrophile) is an active-site residue. The active-site Proton acceptor is the Glu-169. Substrate contacts are provided by residues Gly-175, Ser-215, and 236–237 (GG).

This sequence belongs to the triosephosphate isomerase family. In terms of assembly, homodimer.

It is found in the cytoplasm. It carries out the reaction D-glyceraldehyde 3-phosphate = dihydroxyacetone phosphate. It functions in the pathway carbohydrate biosynthesis; gluconeogenesis. The protein operates within carbohydrate degradation; glycolysis; D-glyceraldehyde 3-phosphate from glycerone phosphate: step 1/1. Its function is as follows. Involved in the gluconeogenesis. Catalyzes stereospecifically the conversion of dihydroxyacetone phosphate (DHAP) to D-glyceraldehyde-3-phosphate (G3P). This chain is Triosephosphate isomerase, found in Borrelia recurrentis (strain A1).